A 329-amino-acid polypeptide reads, in one-letter code: Peroxidase 5 (329 aa).

Residues 1–26 form the signal peptide; the sequence is MSSKRVTWLSLTWVLVFLCLSVELEA. Position 27 is a pyrrolidone carboxylic acid (Gln-27). Disulfide bonds link Cys-37–Cys-117, Cys-70–Cys-75, Cys-123–Cys-324, and Cys-202–Cys-234. His-68 serves as the catalytic Proton acceptor. The Ca(2+) site is built by Asp-69, Val-72, Gly-74, Asp-76, and Ser-78. Pro-165 contacts substrate. His-195 is a binding site for heme b. Thr-196 lines the Ca(2+) pocket. Asn-213 is a glycosylation site (N-linked (GlcNAc...) asparagine). Ser-251 and Asp-256 together coordinate Ca(2+).

It belongs to the peroxidase family. Classical plant (class III) peroxidase subfamily. Heme b is required as a cofactor. Ca(2+) serves as cofactor.

The protein resides in the secreted. It carries out the reaction 2 a phenolic donor + H2O2 = 2 a phenolic radical donor + 2 H2O. Its function is as follows. Removal of H(2)O(2), oxidation of toxic reductants, biosynthesis and degradation of lignin, suberization, auxin catabolism, response to environmental stresses such as wounding, pathogen attack and oxidative stress. These functions might be dependent on each isozyme/isoform in each plant tissue. The sequence is that of Peroxidase 5 from Vitis vinifera (Grape).